The chain runs to 129 residues: Large ribosomal subunit protein bL12 (129 aa).

The protein belongs to the bacterial ribosomal protein bL12 family. In terms of assembly, homodimer. Part of the ribosomal stalk of the 50S ribosomal subunit. Forms a multimeric L10(L12)X complex, where L10 forms an elongated spine to which 2 to 4 L12 dimers bind in a sequential fashion. Binds GTP-bound translation factors.

In terms of biological role, forms part of the ribosomal stalk which helps the ribosome interact with GTP-bound translation factors. Is thus essential for accurate translation. This chain is Large ribosomal subunit protein bL12, found in Thermosipho melanesiensis (strain DSM 12029 / CIP 104789 / BI429).